A 478-amino-acid polypeptide reads, in one-letter code: PRAME family member 4 (478 aa).

The LRR 1; degenerate repeat unit spans residues 99 to 126; that stretch reads RWKLQVLDLQDVCENFWMVWSEAMAHGC. An LRR 2; degenerate repeat occupies 181 to 205; it reads HLCCKKLKILGMPFRNIRSILKMVN. An LRR 3; degenerate repeat occupies 206–232; it reads LDCIQEVEVNCKWVLPILTQFTPYLGH. One copy of the LRR 4; degenerate repeat lies at 233–268; that stretch reads MRNLQKLILSHMDVSRYVSPEQKKEIVTQFTTQFLK. LRR repeat units lie at residues 269 to 294, 295 to 326, 327 to 347, 351 to 378, and 379 to 403; these read LRCL…LSCL, KTSL…SQLK, TLDL…QILL, AATL…ALSR, and CFEL…LLSH.

This sequence belongs to the PRAME family.

The chain is PRAME family member 4 from Homo sapiens (Human).